Reading from the N-terminus, the 296-residue chain is Giardin subunit alpha-3 (296 aa).

4 Annexin repeats span residues 3–72 (DTVT…SNCW), 74–146 (ELPV…TWIK), 153–222 (NNIN…TAHY), and 226–295 (GMNN…VLWR).

It belongs to the annexin family. Giardin subunit alpha subfamily.

It localises to the cytoplasm. Its subcellular location is the cytoskeleton. In terms of biological role, giardins are involved in parasite attachment to the intestinal mucosa and in the cytoskeletal disassembly and reassembly that marks the transition from infectious trophozoite to transmissible cyst. They may interact with other cytoskeletal proteins such as microtubules in the microribbons or crossbridges, to maintain the integrity of the ventral disk. This is Giardin subunit alpha-3 from Giardia intestinalis (Giardia lamblia).